Consider the following 197-residue polypeptide: Phosphoheptose isomerase (197 aa).

The SIS domain occupies 34-196 (MVHCLLGGNK…DRTLFPQDEQ (163 aa)). Residue 49–51 (NGG) coordinates substrate. Zn(2+) is bound by residues His58 and Glu62. Substrate-binding positions include Glu62, 91–92 (ND), 117–119 (STS), Ser122, and Gln172. Gln172 and His180 together coordinate Zn(2+).

Belongs to the SIS family. GmhA subfamily. As to quaternary structure, homotetramer. Zn(2+) is required as a cofactor.

Its subcellular location is the cytoplasm. The enzyme catalyses 2 D-sedoheptulose 7-phosphate = D-glycero-alpha-D-manno-heptose 7-phosphate + D-glycero-beta-D-manno-heptose 7-phosphate. Its pathway is carbohydrate biosynthesis; D-glycero-D-manno-heptose 7-phosphate biosynthesis; D-glycero-alpha-D-manno-heptose 7-phosphate and D-glycero-beta-D-manno-heptose 7-phosphate from sedoheptulose 7-phosphate: step 1/1. Functionally, catalyzes the isomerization of sedoheptulose 7-phosphate in D-glycero-D-manno-heptose 7-phosphate. This is Phosphoheptose isomerase from Shewanella sp. (strain W3-18-1).